Reading from the N-terminus, the 1005-residue chain is MSMILKEIRMNNFKSHVNSRIKFEKGIVAIIGENGSGKSSIFEAVFFALFGAGSNFNYDTIITKGKKSVYVELDFEVNGNNYKIIREYDSGRGGAKLYKNGKPYATTISAVNKAVNEILGVDRNMFLNSIYIKQGEIAKFLSLKPSEKLETVAKLLGIDEFEKCYQKMGEIVKEYEKRLERIEGELNYKENYEKELKNKMSQLEEKNKKLMEINDKLNKIKKEFEDIEKLFNEWENKKLLYEKFINKLEERKRALELKNQELKILEYDLNTVVEARETLNRHKDEYEKYKSLVDEIRKIESRLRELKSHYEDYLKLTKQLEIIKGDIEKLKEFINKSKYRDDIDNLDTLLNKIKDEIERVETIKDLLEELKNLNEEIEKIEKYKRICEECKEYYEKYLELEEKAVEYNKLTLEYITLLQEKKSIEKNINDLETRINKLLEETKNIDIESIENSLKEIEEKKKVLENLQKEKIELNKKLGEINSEIKRLKKILDELKEVEGKCPLCKTPIDENKKMELINQHKTQLNNKYTELEEINKKIREIEKDIEKLKKEIDKEENLKTLKTLYLEKQSQIEELELKLKNYKEQLDEINKKISNYVINGKPVDEILEDIKSQLNKFKNFYNQYLSAVSYLNSVDEEGIRNRIKEIENIVSGWNKEKCREELNKLREDEREINRLKDKLNELKNKEKELIEIENRRSLKFDKYKEYLGLTEKLEELKNIKDGLEEIYNICNSKILAIDNIKRKYNKEDIEIYLNNKILEVNKEINDIEERISYINQKLDEINYNEEEHKKIKELYENKRQELDNVREQKTEIETGIEYLKKDVESLKARLKEMSNLEKEKEKLTKFVEYLDKVRRIFGRNGFQAYLREKYVPLIQKYLNEAFSEFDLPYSFVELTKDFEVRVHAPNGVLTIDNLSGGEQIAVALSLRLAIANALIGNRVECIILDEPTVYLDENRRAKLAEIFRKVKSIPQMIIITHHRELEDVADVIINVKKDGNVSKVKING.

ATP is bound by residues Lys-14, Gly-35 to Ser-40, Ile-62 to Lys-64, and Gln-134. 4 coiled-coil regions span residues Lys-189–Leu-230, Leu-292–Glu-321, Leu-346–Lys-379, and Ala-404–Val-498. One can recognise a Zinc-hook domain in the interval Ile-457–Asp-554. Zn(2+) is bound by residues Cys-502 and Cys-505. 3 coiled-coil regions span residues Thr-523–Asn-600, Lys-656–Glu-692, and Arg-800–Met-834.

The protein belongs to the SMC family. RAD50 subfamily. Homodimer. Forms a heterotetramer composed of two Mre11 subunits and two Rad50 subunits. Zn(2+) is required as a cofactor.

In terms of biological role, part of the Rad50/Mre11 complex, which is involved in the early steps of DNA double-strand break (DSB) repair. The complex may facilitate opening of the processed DNA ends to aid in the recruitment of HerA and NurA. Rad50 controls the balance between DNA end bridging and DNA resection via ATP-dependent structural rearrangements of the Rad50/Mre11 complex. The sequence is that of DNA double-strand break repair Rad50 ATPase from Methanocaldococcus jannaschii (strain ATCC 43067 / DSM 2661 / JAL-1 / JCM 10045 / NBRC 100440) (Methanococcus jannaschii).